Reading from the N-terminus, the 1670-residue chain is MATAVETEACQPTDASWESGGGGDDEMKQALPELESSQQNGGGGGLNIAEPSGGAGREENAGAEAAQSLSHEQPQDSSEAGAAALPRGPEEPERPVRRSFQIPRKSREKKALFQPLTPGSREFEDVVNILHSSYLEPTSVTNFNYRRACLVHNELLEKEFTEKRRELKFDGRLDKELSESYAFLMVDRYQVQTICEKGLHVGQSKITILGSPSMGVYLSRYADLLQANPLDTGAMGDVVIFKIMKGKIKSIYDPMGVKSLESMLNKSALDPTPKHECHVSKNANRITSLLAYRAYELTQYYFYEYGFDELRRRPRHVCPYAVVSFTYKDDIQTPKFVPSSRSNSFNTDRNIDKYNYTLWKGQLLNKGKLLCYISLRSATRAFLPIKLPEKLDVETVMSIDHLKQKIPPALFYKETYLGPNEVLKNGMYCSLYEVVEKTRIGSNMESLLQKLDREKLVLVKPLGDRGYLFLLSPYQMVPPYEYQTAKSRVLHALFLFQEPRSIVTSQKGSTNAAPQERHESMPDVLKIAQFLQFSLIQCRKEFKNISAINFHSVVEKYVSEFFKRGFGSGKREFIMFPYDSRLDDKKFLYSAPRNKSHIDTCLHAYIFRPEVYQLPICKLKELFEENRKLQQFSPLSDYEGQEEEMNGTKMKFGKRNNSRGEAIISGKQRSSHSLDYDKDRVKELINLIQCRKKSVGGDSDTEDMRSKTVLKRKLEDLPENMRKLAKTSNLSENCHLYEESPQPIGSLGHDADLRRQQQDTCNSGIADIHRLFNWLSETLANARHSDASLTDTVNKALGLSTDDAYEELRQKHEYELNSTPDKKDYEQPTCAKVENAQFKGTQSLLLEVDATSKYSVAISTSEVGTDHKLHLKEDPNLISVNNFEDCSLCPSVPIEHGFRRQQSKSNNVEETEIHWKLIPITGGNARSPEDQLGKHGEKQTPGMKSPEEQLVCVPPQEAFPNDPRVINRQRSSDYQFPSSPFTDTLKGTTEDDVLTGQVEEQCVPAAEAEPPAVSETTERTVLGEYNLFSRKIEEILKQKNVSYVSTVSTPIFSTQEKMKRLSEFIYSKTSKAGVQEFVDGLHEKLNTIIIKASAKGGNLPPVSPNDSGAKIASNPLERHVIPVSSSDFNNKHLLEPLCSDPLKDTNSDEQHSTSALTEVEMNQPQHATELMVTSDHIVPGDMAREPVEETTKSPSDVNISAQPALSNFISQLEPEVFNSLVKIMKDVQKNTVKFYIHEEEESVLCKEIKEYLIKLGNTECHPEQFLERRSKLDKLLIIIQNEDIAGFIHKIPGLVTLKKLPCVSFAGVDSLDDVKNHTYNELFVSGGFIVSDESILNPEVVTVENLKNFLTFLEELSTPEGKWQWKVHCKFQKKLKELGRLNAKALSLLTLLNVYQKKHLVEILSYHNCDSQTRNAPELDCLIRLQAQNIQQRHIVFLTEKNIKMLSSYTDNGIVVATAEDFMQNFKNLVGYHNSITEENLPQLGANENLESQSALLENDEKDEEDMSLDSGDEISHIEVCSNFHSEIWEKETKGSRGTDQKKNTQIELQSSPDVQNSLLEDKTYLDSEERTSIDIVCSEGENSNSTEQDSYSNFQVYHSQLNMSHQFSHFNVLTHQTFLGTPYALSSSQSQENENYFLSAYTESLDRDKSPPPLSWGKSDSSRPYSQEK.

The segment at 1–110 (MATAVETEAC…QIPRKSREKK (110 aa)) is disordered. Ala-2 is subject to N-acetylalanine. The segment covering 67-78 (QSLSHEQPQDSS) has biased composition (polar residues). Position 344 is a phosphoserine (Ser-344). A Glycyl lysine isopeptide (Lys-Gly) (interchain with G-Cter in SUMO2) cross-link involves residue Lys-586. Phosphoserine occurs at positions 633, 636, 673, and 800. Glycyl lysine isopeptide (Lys-Gly) (interchain with G-Cter in SUMO2) cross-links involve residues Lys-823 and Lys-832. Phosphoserine is present on Ser-843. Lys-872 is covalently cross-linked (Glycyl lysine isopeptide (Lys-Gly) (interchain with G-Cter in SUMO2)). A disordered region spans residues 921–947 (TGGNARSPEDQLGKHGEKQTPGMKSPE). Residues Ser-927, Ser-971, and Ser-979 each carry the phosphoserine modification. Positions 927 to 938 (SPEDQLGKHGEK) are enriched in basic and acidic residues. A phosphothreonine mark is found at Thr-982 and Thr-1049. Ser-1103 carries the phosphoserine modification. Over residues 1532–1545 (ETKGSRGTDQKKNT) the composition is skewed to basic and acidic residues. Disordered regions lie at residues 1532 to 1558 (ETKGSRGTDQKKNTQIELQSSPDVQNS) and 1638 to 1670 (FLSAYTESLDRDKSPPPLSWGKSDSSRPYSQEK). 2 stretches are compositionally biased toward polar residues: residues 1546–1558 (QIELQSSPDVQNS) and 1659–1670 (KSDSSRPYSQEK). Ser-1552 is modified (phosphoserine).

Belongs to the TASOR family. As to quaternary structure, component of the HUSH complex; at least composed of TASOR, PPHLN1 and MPHOSPH8. Interacts with MORC2; the interaction associateS MORC2 with the HUSH complex which recruits MORC2 to heterochromatic loci. Interacts with ZNF638; leading to recruitment of the HUSH complex to unintegrated retroviral DNA. Interacts with INPP5A, EML1, SV1L, GPSM2, ITGB3BP, CNTN1, ETFA, PSMD8, S100A10, MPHOSPH8, TMEM100, ALB, PARPBP, HCFC2, NCBP1 and SETDB1.

The protein localises to the nucleus. It is found in the chromosome. Component of the HUSH complex, a multiprotein complex that mediates epigenetic repression. The HUSH complex is recruited to genomic loci rich in H3K9me3 and is required to maintain transcriptional silencing by promoting recruitment of SETDB1, a histone methyltransferase that mediates further deposition of H3K9me3, as well as MORC2. Also represses L1 retrotransposons in collaboration with MORC2 and, probably, SETDB1, the silencing is dependent of repressive epigenetic modifications, such as H3K9me3 mark. Silencing events often occur within introns of transcriptionally active genes, and lead to the down-regulation of host gene expression. The HUSH complex is also involved in the silencing of unintegrated retroviral DNA by being recruited by ZNF638: some part of the retroviral DNA formed immediately after infection remains unintegrated in the host genome and is transcriptionally repressed. Plays a crucial role in early embryonic development. Involved in the organization of spindle poles and spindle apparatus assembly during zygotic division. Plays an important role in maintaining epiblast fitness or potency. This is Protein TASOR from Homo sapiens (Human).